The primary structure comprises 409 residues: LL-diaminopimelate aminotransferase (409 aa).

Residues Tyr-15 and Gly-42 each coordinate substrate. Residues Tyr-72, 108–109 (AK), Tyr-132, Asn-186, Tyr-217, and 245–247 (SFS) each bind pyridoxal 5'-phosphate. Positions 109, 132, and 186 each coordinate substrate. Residue Lys-248 is modified to N6-(pyridoxal phosphate)lysine. Pyridoxal 5'-phosphate contacts are provided by Arg-256 and Asn-291. Residues Asn-291 and Arg-386 each contribute to the substrate site.

The protein belongs to the class-I pyridoxal-phosphate-dependent aminotransferase family. LL-diaminopimelate aminotransferase subfamily. As to quaternary structure, homodimer. Pyridoxal 5'-phosphate is required as a cofactor.

It carries out the reaction (2S,6S)-2,6-diaminopimelate + 2-oxoglutarate = (S)-2,3,4,5-tetrahydrodipicolinate + L-glutamate + H2O + H(+). Its pathway is amino-acid biosynthesis; L-lysine biosynthesis via DAP pathway; LL-2,6-diaminopimelate from (S)-tetrahydrodipicolinate (aminotransferase route): step 1/1. Its function is as follows. Involved in the synthesis of meso-diaminopimelate (m-DAP or DL-DAP), required for both lysine and peptidoglycan biosynthesis. Catalyzes the direct conversion of tetrahydrodipicolinate to LL-diaminopimelate. This is LL-diaminopimelate aminotransferase from Desulforapulum autotrophicum (strain ATCC 43914 / DSM 3382 / VKM B-1955 / HRM2) (Desulfobacterium autotrophicum).